Consider the following 217-residue polypeptide: 7-cyano-7-deazaguanine synthase (217 aa).

Residue 10–20 (FSGGQDSTTCL) coordinates ATP. Cys-185, Cys-194, Cys-197, and Cys-200 together coordinate Zn(2+).

The protein belongs to the QueC family. Homodimer. The cofactor is Zn(2+).

The enzyme catalyses 7-carboxy-7-deazaguanine + NH4(+) + ATP = 7-cyano-7-deazaguanine + ADP + phosphate + H2O + H(+). The protein operates within purine metabolism; 7-cyano-7-deazaguanine biosynthesis. Catalyzes the ATP-dependent conversion of 7-carboxy-7-deazaguanine (CDG) to 7-cyano-7-deazaguanine (preQ(0)). The sequence is that of 7-cyano-7-deazaguanine synthase from Streptococcus thermophilus (strain CNRZ 1066).